A 382-amino-acid chain; its full sequence is Lipoyl synthase, mitochondrial (382 aa).

The transit peptide at 1 to 30 directs the protein to the mitochondrion; the sequence is MHGRRHLAASLARALTYAPSRSISSTPSLL. The segment covering 25–34 has biased composition (polar residues); that stretch reads STPSLLQTLD. Residues 25-46 form a disordered region; sequence STPSLLQTLDPSTPSPAAAPPT. [4Fe-4S] cluster is bound by residues Cys112, Cys117, Cys123, Cys143, Cys147, Cys150, and Ser359. A Radical SAM core domain is found at 128–348; the sequence is ETGTATATIM…RSLGVDMGFR (221 aa).

It belongs to the radical SAM superfamily. Lipoyl synthase family. The cofactor is [4Fe-4S] cluster.

It localises to the mitochondrion. It catalyses the reaction [[Fe-S] cluster scaffold protein carrying a second [4Fe-4S](2+) cluster] + N(6)-octanoyl-L-lysyl-[protein] + 2 oxidized [2Fe-2S]-[ferredoxin] + 2 S-adenosyl-L-methionine + 4 H(+) = [[Fe-S] cluster scaffold protein] + N(6)-[(R)-dihydrolipoyl]-L-lysyl-[protein] + 4 Fe(3+) + 2 hydrogen sulfide + 2 5'-deoxyadenosine + 2 L-methionine + 2 reduced [2Fe-2S]-[ferredoxin]. The protein operates within protein modification; protein lipoylation via endogenous pathway; protein N(6)-(lipoyl)lysine from octanoyl-[acyl-carrier-protein]: step 2/2. Its function is as follows. Catalyzes the radical-mediated insertion of two sulfur atoms into the C-6 and C-8 positions of the octanoyl moiety bound to the lipoyl domains of lipoate-dependent enzymes, thereby converting the octanoylated domains into lipoylated derivatives. This is Lipoyl synthase, mitochondrial from Oryza sativa subsp. japonica (Rice).